Consider the following 854-residue polypeptide: Putative COX1/OXI3 intron 2 protein (854 aa).

The Reverse transcriptase domain occupies 329–613; that stretch reads LSKDINTNMF…EGVSFLGYDV (285 aa).

The protein resides in the mitochondrion. This is Putative COX1/OXI3 intron 2 protein (AI2) from Saccharomyces cerevisiae (strain ATCC 204508 / S288c) (Baker's yeast).